The sequence spans 81 residues: Photosystem I iron-sulfur center (81 aa).

4Fe-4S ferredoxin-type domains follow at residues 2–31 and 39–68; these read AHSV…MISW and IASA…VRVY. [4Fe-4S] cluster-binding residues include C11, C14, C17, C21, C48, C51, C54, and C58.

As to quaternary structure, the eukaryotic PSI reaction center is composed of at least 11 subunits. It depends on [4Fe-4S] cluster as a cofactor.

It localises to the plastid. The protein resides in the chloroplast thylakoid membrane. The catalysed reaction is reduced [plastocyanin] + hnu + oxidized [2Fe-2S]-[ferredoxin] = oxidized [plastocyanin] + reduced [2Fe-2S]-[ferredoxin]. Functionally, apoprotein for the two 4Fe-4S centers FA and FB of photosystem I (PSI); essential for photochemical activity. FB is the terminal electron acceptor of PSI, donating electrons to ferredoxin. The C-terminus interacts with PsaA/B/D and helps assemble the protein into the PSI complex. Required for binding of PsaD and PsaE to PSI. PSI is a plastocyanin-ferredoxin oxidoreductase, converting photonic excitation into a charge separation, which transfers an electron from the donor P700 chlorophyll pair to the spectroscopically characterized acceptors A0, A1, FX, FA and FB in turn. This Anthoceros angustus (Hornwort) protein is Photosystem I iron-sulfur center (psaC).